The sequence spans 183 residues: Bifunctional protein PyrR (183 aa).

Substrate-binding positions include 42-43, arginine 87, 104-112, arginine 137, and valine 161; these read TR and DDVLYTGRT. A PRPP-binding motif is present at residues 100–112; the sequence is VILVDDVLYTGRT.

The protein belongs to the purine/pyrimidine phosphoribosyltransferase family. PyrR subfamily.

The enzyme catalyses UMP + diphosphate = 5-phospho-alpha-D-ribose 1-diphosphate + uracil. Regulates the transcription of the pyrimidine nucleotide (pyr) operon in response to exogenous pyrimidines. Its function is as follows. Also displays a weak uracil phosphoribosyltransferase activity which is not physiologically significant. The polypeptide is Bifunctional protein PyrR (Deinococcus radiodurans (strain ATCC 13939 / DSM 20539 / JCM 16871 / CCUG 27074 / LMG 4051 / NBRC 15346 / NCIMB 9279 / VKM B-1422 / R1)).